A 395-amino-acid chain; its full sequence is Probable nitrate/nitrite transporter NarK2 (395 aa).

The next 12 membrane-spanning stretches (helical) occupy residues 8–28, 45–65, 72–92, 98–118, 131–151, 157–177, 205–225, 244–266, 274–294, 301–321, 333–353, and 365–385; these read LVLA…IGPL, LLVA…GPLT, AMLI…GVAA, ALLV…AVGI, GFST…AFFT, WFGL…TAVV, LPVT…FVAF, AGAR…GWLS, VVLA…LQPP, ATFI…FAWV, VTGI…LVMG, and VGLL…ALHA.

The protein belongs to the major facilitator superfamily. Nitrate/nitrite porter (TC 2.A.1.8) family.

It is found in the cell membrane. Functionally, involved in excretion of nitrite produced by the dissimilatory reduction of nitrate. The sequence is that of Probable nitrate/nitrite transporter NarK2 (narK2) from Mycobacterium tuberculosis (strain CDC 1551 / Oshkosh).